We begin with the raw amino-acid sequence, 882 residues long: MRALLAQNRLVTLCGTGGVGKTRLAIQIASASELRDGLCFVDLAPITESGIVAATAARAVGLPDQPGRSTMDSLRRFIGNRRMLMVLDNCEHLLDACAALVVELLGACPELTILATSREPIGMAGEITWRVPSMSITDEAVELFADRASRVQPGFTIANHNAAAVGEICRRLDGIPLAIEFAAARVRSMSPLEIADGLDDCFRLLAGGVRGAVQRQQTLRASIDWSHALLTETEQILFRRLAPFVGGFDLAAVRAVAAGSDLDPFSVLDQLTLLVDKSLVVADDCQGRTRYRLLETVRRYALEKLGDSGEADVHARHRDYYTALAASLNTPADNDHQRLVARAETEIDNLRAAFAWSRENGHITEALQLASSLQPIWFGRAHLREGLSWFNSILEDQRFHRLAVSTAVRARALADKAMLSTWLATSPVGATDIIAPAQQALAMAREVGDPAALVRALTACGCSSGYNAEAAAPYFAEATDLARAIDDKWTLCQILYWRGVGTCISGDPNALRAAAEECRDLADTIGDRFVSRHCSLWLSLAQMWAGNLTEALELSREITAEAEASNDVPTKVLGLYTQAQVLAYCGASAAHAIAGACIAAATELGGVYQGIGYAAMTYAALAAGDVTAALEASDAARPILRAQPDQVTMHQVLMAQLALAGGDAIAARQFANDAVDATNGWHRMVALTIRARVATARGEPELARDDAHAALACGAELHIYQGMPDAMELLAGLAGEVGSHSEGVRLLGAAAALRQQTRQVRFKIWDAGYQASVTALREAMGDEDFDRAWAEGAALSTDEAIAYAQRGRGERKRPARGWGSLTPTERDVVRLVSEGLSNKDIAKRLFVSPRTVQTHLTHVYAKLGLPSRVQLVDEAARRGSPS.

An HTH luxR-type domain is found at 814-879; the sequence is PARGWGSLTP…QLVDEAARRG (66 aa). Positions 838–857 form a DNA-binding region, H-T-H motif; it reads NKDIAKRLFVSPRTVQTHLT.

This chain is Putative HTH-type transcriptional regulator Rv0890c, found in Mycobacterium tuberculosis (strain ATCC 25618 / H37Rv).